Here is a 345-residue protein sequence, read N- to C-terminus: ATP-dependent kinase YFH7 (345 aa).

ATP is bound at residue 31–39 (GPPGSGKST).

It belongs to the YFH7 family.

Functionally, ATP-dependent kinase that could be involved in endoplasmic reticulum membrane assembly. The protein is ATP-dependent kinase YFH7 (YFH7) of Candida glabrata (strain ATCC 2001 / BCRC 20586 / JCM 3761 / NBRC 0622 / NRRL Y-65 / CBS 138) (Yeast).